The sequence spans 55 residues: Photosystem II reaction center X protein (55 aa).

The helical transmembrane segment at 24-44 threads the bilayer; sequence IGSFLAAAALIVVPAASFLLW.

Belongs to the PsbX family. Type 2 subfamily. In terms of assembly, PSII consists of a core antenna complex that captures photons, and an electron transfer chain that converts photonic excitation into a charge separation. PSII forms dimeric complexes.

The protein resides in the cellular thylakoid membrane. Functionally, involved in the binding and/or turnover of quinones at the Q(B) site of Photosystem II. The sequence is that of Photosystem II reaction center X protein from Prochlorococcus marinus (strain SARG / CCMP1375 / SS120).